A 330-amino-acid polypeptide reads, in one-letter code: Major ferric iron-binding protein (330 aa).

The N-terminal stretch at 1-22 (MKTSIRYALLAAALTAATPALA) is a signal peptide. Fe cation is bound by residues His-31, Glu-79, Tyr-217, and Tyr-218.

It belongs to the bacterial solute-binding protein 1 family.

Its subcellular location is the periplasm. Its function is as follows. This protein may be a central component in the iron-acquisition system. The polypeptide is Major ferric iron-binding protein (fbp) (Neisseria gonorrhoeae).